The following is a 507-amino-acid chain: FSD1-like protein (507 aa).

Positions 70-109 (KQEQVRKSQELQSQLSQCNNALENSEELLEFATRSLDIKE) form a coiled coil. Positions 105–162 (LDIKEPEEFSKAARQIKDRVTMASAFRLSLKPKVSDNMTHLMVDFSQERQMLQTLKFL) constitute a COS domain. The region spanning 164–268 (VPKAPEIDPV…DPVTLETRAL (105 aa)) is the Fibronectin type-III domain. The 194-residue stretch at 291-484 (DPTGGKGQES…LSTGMQVPSA (194 aa)) folds into the B30.2/SPRY domain. The disordered stretch occupies residues 292-345 (PTGGKGQESKIKGKENKGSVHVTSLKKHTSGTPSPKRTSVGSRPPAVRGSRDRF). A compositionally biased stretch (basic and acidic residues) spans 298-309 (QESKIKGKENKG). The span at 321-332 (SGTPSPKRTSVG) shows a compositional bias: polar residues. Residues Ser498 and Ser501 each carry the phosphoserine modification.

The sequence is that of FSD1-like protein (Fsd1l) from Mus musculus (Mouse).